The sequence spans 278 residues: HCLS1-associated protein X-1 (278 aa).

Residue Ser-2 is modified to N-acetylserine. The required for localization in mitochondria stretch occupies residues 2-43 (SVFDLFRGFFGFPGPRSHRDPFFGGMTRDDDDDEDDEEEEDS). Disordered stretches follow at residues 15–50 (GPRSHRDPFFGGMTRDDDDDEDDEEEEDSGAWGRES) and 99–262 (LPSH…ALDD). Positions 30–43 (DDDDDEDDEEEEDS) are enriched in acidic residues. The involved in HCLS1 binding stretch occupies residues 113–278 (TPGVRLREGQ…LLLGRWFRSR (166 aa)). A compositionally biased stretch (basic and acidic residues) spans 132–152 (PDSHQPRIFEGVLESHAKPES). Residues 174-205 (VSPHSRAREDKDLDSQVSQEGLGPLLQPQPKS) are involved in CASP9 binding. An involved in GNA13 binding region spans residues 175–246 (SPHSRAREDK…TTVTHQEAHD (72 aa)). Positions 182-278 (EDKDLDSQVS…LLLGRWFRSR (97 aa)) are required for localization in sarcoplasmic reticulum. The segment at 183-278 (DKDLDSQVSQ…LLLGRWFRSR (96 aa)) is involved in PKD2 binding. Ser-188 and Ser-191 each carry phosphoserine. An involved in PLN binding region spans residues 202 to 224 (QPKSYFKSISVTKITKPDGTVEE). Residues 202–244 (QPKSYFKSISVTKITKPDGTVEEHRTVVDSEGRRETTVTHQEA) are involved in ATP2A2 binding. Residues 209–278 (SISVTKITKP…LLLGRWFRSR (70 aa)) are mediates interaction with UCP3. The span at 216–254 (TKPDGTVEEHRTVVDSEGRRETTVTHQEAHDSSRSDPDP) shows a compositional bias: basic and acidic residues. Residues 269-278 (LLLGRWFRSR) are required for ITGB6 binding.

Belongs to the HAX1 family. Interacts with ABCB1, ABCB4 and ABCB11. Directly associates with HCLS1/HS1, through binding to its N-terminal region. Interacts with CTTN. Interacts with PKD2. Interacts with GNA13. Interacts with CASP9. Interacts with ITGB6. Interacts with PLN and ATP2A2; these interactions are inhibited by calcium. Interacts with GRB7. Interacts (via C-terminus) with XIAP/BIRC4 (via BIR 2 domain and BIR 3 domain) and this interaction blocks ubiquitination of XIAP/BIRC4. Interacts with TPC2. Interacts with KCNC3. Interacts with XPO1. Interacts with RNF217. Interacts with UCP3; the interaction is direct and calcium-dependent. Interacts with MAPRE2; this interaction regulates cell migration in keratinocytes. In terms of tissue distribution, present in striated muscles (at protein level).

It localises to the mitochondrion matrix. The protein localises to the endoplasmic reticulum. It is found in the nucleus membrane. Its subcellular location is the cytoplasmic vesicle. The protein resides in the cytoplasm. It localises to the cell cortex. The protein localises to the cell membrane. It is found in the sarcoplasmic reticulum. Its subcellular location is the P-body. The protein resides in the nucleus. In terms of biological role, recruits the Arp2/3 complex to the cell cortex and regulates reorganization of the cortical actin cytoskeleton via its interaction with KCNC3 and the Arp2/3 complex. Slows down the rate of inactivation of KCNC3 channels. Promotes GNA13-mediated cell migration. Involved in the clathrin-mediated endocytosis pathway. May be involved in internalization of ABC transporters such as ABCB11. May inhibit CASP9 and CASP3. Promotes cell survival. May regulate intracellular calcium pools. The protein is HCLS1-associated protein X-1 (Hax1) of Rattus norvegicus (Rat).